The primary structure comprises 529 residues: MDLPVGPGAAGPSNVPAFLTKLWTLVSDPDTDALICWSPSGNSFHVFDQGQFAKEVLPKYFKHNNMASFVRQLNMYGFRKVVHIEQGGLVKPERDDTEFQHPCFLRGQEQLLENIKRKVTSVSTLKSEDIKIRQDSVTKLLTDVQLMKGKQECMDSKLLAMKHENEALWREVASLRQKHAQQQKVVNKLIQFLISLVQSNRILGVKRKIPLMLNDSGSAHSMPKYSRQFSLEHVHGSGPYSAPSPAYSSSSLYAPDAVASSGPIISDITELAPASPMASPGGSIDERPLSSSPLVRVKEEPPSPPQSPRVEEASPGRPSSVDTLLSPTALIDSILRESEPAPASVTALTDARGHTDTEGRPPSPPPTSTPEKCLSVACLDKNELSDHLDAMDSNLDNLQTMLSSHGFSVDTSALLDLFSPSVTVPDMSLPDLDSSLASIQELLSPQEPPRPPEAENSSPDSGKQLVHYTAQPLFLLDPGSVDTGSNDLPVLFELGEGSYFSEGDGFAEDPTISLLTGSEPPKAKDPTVS.

Met-1 carries the post-translational modification N-acetylmethionine. The DNA-binding domain stretch occupies residues 15–120 (VPAFLTKLWT…LLENIKRKVT (106 aa)). Lys-80 bears the N6-acetyllysine mark. Lys-91 carries the post-translational modification N6-acetyllysine; alternate. Lys-91 is covalently cross-linked (Glycyl lysine isopeptide (Lys-Gly) (interchain with G-Cter in SUMO2); alternate). N6-acetyllysine is present on Lys-118. The residue at position 121 (Ser-121) is a Phosphoserine; by MAPKAPK2. Glycyl lysine isopeptide (Lys-Gly) (interchain with G-Cter in SUMO2) cross-links involve residues Lys-126 and Lys-131. Positions 130-203 (IKIRQDSVTK…ISLVQSNRIL (74 aa)) are hydrophobic repeat HR-A/B. Thr-142 is subject to Phosphothreonine; by CK2. 2 positions are modified to N6-acetyllysine: Lys-150 and Lys-188. The interval 203–224 (LGVKRKIPLMLNDSGSAHSMPK) is d domain. Lys-208 is modified (N6-acetyllysine; alternate). A Glycyl lysine isopeptide (Lys-Gly) (interchain with G-Cter in SUMO2); alternate cross-link involves residue Lys-208. Position 216 is a phosphoserine; by PLK1 (Ser-216). The tract at residues 221–310 (SMPKYSRQFS…PPSPPQSPRV (90 aa)) is regulatory domain. A Glycyl lysine isopeptide (Lys-Gly) (interchain with G-Cter in SUMO2) cross-link involves residue Lys-224. Position 230 is a phosphoserine; by CAMK2A (Ser-230). Phosphoserine occurs at positions 275 and 292. Residues 295–324 (VRVKEEPPSPPQSPRVEEASPGRPSSVDTL) are disordered. The residue at position 298 (Lys-298) is an N6-acetyllysine; alternate. Lys-298 is covalently cross-linked (Glycyl lysine isopeptide (Lys-Gly) (interchain with G-Cter in SUMO2); alternate). Lys-298 participates in a covalent cross-link: Glycyl lysine isopeptide (Lys-Gly) (interchain with G-Cter in SUMO); alternate. Ser-303 carries the post-translational modification Phosphoserine; by GSK3-beta. A Phosphoserine; by MAPK3 modification is found at Ser-307. Phosphoserine occurs at positions 314 and 319. The residue at position 320 (Ser-320) is a Phosphoserine; by PKA. Thr-323 is subject to Phosphothreonine. Residue Ser-326 is modified to Phosphoserine; by MAPK12. The tract at residues 336–372 (RESEPAPASVTALTDARGHTDTEGRPPSPPPTSTPEK) is disordered. A Phosphoserine modification is found at Ser-344. At Ser-363 the chain carries Phosphoserine; by MAPK8. The segment at 371 to 529 (EKCLSVACLD…PPKAKDPTVS (159 aa)) is transactivation domain. Residues 384 to 409 (LSDHLDAMDSNLDNLQTMLSSHGFSV) are hydrophobic repeat HR-C. The 9aaTAD signature appears at 412–420 (SALLDLFSP). Ser-419 is modified (phosphoserine; by PLK1). Ser-444 bears the Phosphoserine mark. Disordered regions lie at residues 444–463 (SPQEPPRPPEAENSSPDSGK) and 502–529 (EGDGFAEDPTISLLTGSEPPKAKDPTVS). Residue Lys-524 is modified to N6-acetyllysine.

It belongs to the HSF family. As to quaternary structure, monomer; cytoplasmic latent and transcriptionally inactive monomeric form in unstressed cells. Homotrimer; in response to stress, such as heat shock, homotrimerizes and translocates into the nucleus, binds to heat shock element (HSE) sequences in promoter of heat shock protein (HSP) genes and acquires transcriptional ability. Interacts (via monomeric form) with FKBP4; this interaction occurs in unstressed cells. Associates (via monomeric form) with HSP90 proteins in a multichaperone complex in unnstressed cell; this association maintains HSF1 in a non-DNA-binding and transcriptional inactive form by preventing HSF1 homotrimerization. Homotrimeric transactivation activity is modulated by protein-protein interactions and post-translational modifications. Interacts with HSP90AA1; this interaction is decreased in a IER5-dependent manner, promoting HSF1 accumulation in the nucleus, homotrimerization and DNA-binding activities. Part (via regulatory domain in the homotrimeric form) of a large heat shock-induced HSP90-dependent multichaperone complex at least composed of FKBP4, FKBP5, HSP90 proteins, PPID, PPP5C and PTGES3; this association maintains the HSF1 homotrimeric DNA-bound form in a transcriptionally inactive form. Interacts with BAG3 (via BAG domain); this interaction occurs in normal and heat-shocked cells promoting nuclear shuttling of HSF1 in a BAG3-dependent manner. Interacts (via homotrimeric and hyperphosphorylated form) with FKBP4; this interaction occurs upon heat shock in a HSP90-dependent multichaperone complex. Interacts (via homotrimeric form preferentially) with EEF1A proteins. In heat shocked cells, stress-denatured proteins compete with HSF1 homotrimeric DNA-bound form for association of the HSP90-dependent multichaperone complex, and hence alleviating repression of HSF1-mediated transcriptional activity. Interacts (via homotrimeric form preferentially) with DAXX; this interaction relieves homotrimeric HSF1 from repression of its transcriptional activity by HSP90-dependent multichaperone complex upon heat shock. Interacts (via D domain and preferentially with hyperphosphorylated form) with JNK1; this interaction occurs under both normal growth conditions and immediately upon heat shock. Interacts (via D domain and preferentially with hyperphosphorylated form) with MAPK3; this interaction occurs upon heat shock. Interacts with IER5 (via central region); this interaction promotes PPP2CA-induced dephosphorylation on Ser-121, Ser-307, Ser-314, Thr-323 and Thr-367 and HSF1 transactivation activity. Found in a ribonucleoprotein complex composed of the HSF1 homotrimeric form, translation elongation factor eEF1A proteins and non-coding RNA heat shock RNA-1 (HSR1); this complex occurs upon heat shock and stimulates HSF1 DNA-binding activity. Interacts (via transactivation domain) with HSPA1A/HSP70 and DNAJB1; these interactions result in the inhibition of heat shock- and HSF1-induced transcriptional activity during the attenuation and recovery phase from heat shock. Interacts (via Ser-303 and Ser-307 phosphorylated form) with YWHAE; this interaction promotes HSF1 sequestration in the cytoplasm in an ERK-dependent manner. Found in a complex with IER5 and PPP2CA. Interacts with TPR; this interaction increases upon heat shock and stimulates export of HSP70 mRNA. Interacts with SYMPK (via N-terminus) and CSTF2; these interactions occur upon heat shock. Interacts (via transactivation domain) with HSPA8. Interacts with EEF1D; this interaction occurs at heat shock promoter element (HSE) sequences. Interacts with MAPKAPK2. Interacts with PRKACA/PKA. Interacts (via transactivation domain) with GTF2A2. Interacts (via transactivation domain) with GTF2B. Interacts (via transactivation domain) with TBP. Interacts with CDK9, CCNT1 and EP300. Interacts (via N-terminus) with XRCC5 (via N-terminus) and XRCC6 (via N-terminus); these interactions are direct and prevent XRCC5/XRCC6 heterodimeric binding and non-homologous end joining (NHEJ) repair activities induced by ionizing radiation (IR). Interacts with PLK1; this interaction occurs during the early mitotic period, increases upon heat shock but does not modulate neither HSF1 homotrimerization and DNA-binding activities. Interacts (via Ser-216 phosphorylated form) with CDC20; this interaction occurs in mitosis in a MAD2L1-dependent manner and prevents PLK1-stimulated degradation of HSF1 by blocking the recruitment of the SCF(BTRC) ubiquitin ligase complex. Interacts with MAD2L1; this interaction occurs in mitosis. Interacts with BTRC; this interaction occurs during mitosis, induces its ubiquitin-dependent degradation following stimulus-dependent phosphorylation at Ser-216, a process inhibited by CDC20. Interacts with HSP90AA1 and HSP90AB1. Forms a complex with TTC5/STRAP and p300/EP300; these interactions augment chromatin-bound HSF1 and p300/EP300 histone acetyltransferase activity. Phosphorylated. Phosphorylated in unstressed cells; this phosphorylation is constitutive and implicated in the repression of HSF1 transcriptional activity. Phosphorylated on Ser-121 by MAPKAPK2; this phosphorylation promotes interaction with HSP90 proteins and inhibits HSF1 homotrimerization, DNA-binding and transactivation activities. Phosphorylation on Ser-303 by GSK3B/GSK3-beta and on Ser-307 by MAPK3 within the regulatory domain is involved in the repression of HSF1 transcriptional activity and occurs in a RAF1-dependent manner. Phosphorylation on Ser-303 and Ser-307 increases HSF1 nuclear export in a YWHAE- and XPO1/CRM1-dependent manner. Phosphorylation on Ser-307 is a prerequisite for phosphorylation on Ser-303. According to PubMed:9535852, Ser-303 is not phosphorylated in unstressed cells. Phosphorylated on Ser-419 by PLK1; phosphorylation promotes nuclear translocation upon heat shock. Hyperphosphorylated upon heat shock and during the attenuation and recovery phase period of the heat shock response. Phosphorylated on Thr-142; this phosphorylation increases HSF1 transactivation activity upon heat shock. Phosphorylation on Ser-230 by CAMK2A; this phosphorylation enhances HSF1 transactivation activity upon heat shock. Phosphorylation on Ser-326 by MAPK12; this phosphorylation enhances HSF1 nuclear translocation, homotrimerization and transactivation activities upon heat shock. Phosphorylated on Ser-320 by PRKACA/PKA; this phosphorylation promotes nuclear localization and transcriptional activity upon heat shock. Phosphorylated on Ser-363 by MAPK8; this phosphorylation occurs upon heat shock, induces HSF1 translocation into nuclear stress bodies and negatively regulates transactivation activity. Neither basal nor stress-inducible phosphorylation on Ser-230, Ser-292, Ser-303, Ser-307, Ser-314, Ser-319, Ser-320, Thr-323, Ser-326, Ser-338, Ser-344, Ser-363, Thr-367, Ser-368 and Thr-369 within the regulatory domain is involved in the regulation of HSF1 subcellular localization or DNA-binding activity; however, it negatively regulates HSF1 transactivation activity. Phosphorylated on Ser-216 by PLK1 in the early mitotic period; this phosphorylation regulates HSF1 localization to the spindle pole, the recruitment of the SCF(BTRC) ubiquitin ligase complex inducing HSF1 degradation, and hence mitotic progression. Dephosphorylated on Ser-121, Ser-307, Ser-314, Thr-323 and Thr-367 by phosphatase PPP2CA in an IER5-dependent manner, leading to HSF1-mediated transactivation activity. In terms of processing, sumoylated with SUMO1 and SUMO2 upon heat shock in a ERK2-dependent manner. Sumoylated by SUMO1 on Lys-298; sumoylation occurs upon heat shock and promotes its localization to nuclear stress bodies and DNA-binding activity. Phosphorylation on Ser-303 and Ser-307 is probably a prerequisite for sumoylation. Post-translationally, acetylated on Lys-118; this acetylation is decreased in a IER5-dependent manner. Acetylated on Lys-118, Lys-208 and Lys-298; these acetylations occur in a EP300-dependent manner. Acetylated on Lys-80; this acetylation inhibits DNA-binding activity upon heat shock. Deacetylated on Lys-80 by SIRT1; this deacetylation increases DNA-binding activity. Ubiquitinated by SCF(BTRC) and degraded following stimulus-dependent phosphorylation at Ser-216 by PLK1 in mitosis. Polyubiquitinated. Undergoes proteasomal degradation upon heat shock and during the attenuation and recovery phase period of the heat shock response.

It localises to the nucleus. Its subcellular location is the cytoplasm. The protein resides in the nucleoplasm. The protein localises to the perinuclear region. It is found in the cytoskeleton. It localises to the spindle pole. Its subcellular location is the microtubule organizing center. The protein resides in the centrosome. The protein localises to the chromosome. It is found in the centromere. It localises to the kinetochore. In terms of biological role, functions as a stress-inducible and DNA-binding transcription factor that plays a central role in the transcriptional activation of the heat shock response (HSR), leading to the expression of a large class of molecular chaperones, heat shock proteins (HSPs), that protect cells from cellular insult damage. In unstressed cells, is present in a HSP90-containing multichaperone complex that maintains it in a non-DNA-binding inactivated monomeric form. Upon exposure to heat and other stress stimuli, undergoes homotrimerization and activates HSP gene transcription through binding to site-specific heat shock elements (HSEs) present in the promoter regions of HSP genes. Upon heat shock stress, forms a chromatin-associated complex with TTC5/STRAP and p300/EP300 to stimulate HSR transcription, therefore increasing cell survival. Activation is reversible, and during the attenuation and recovery phase period of the HSR, returns to its unactivated form. Binds to inverted 5'-NGAAN-3' pentamer DNA sequences. Binds to chromatin at heat shock gene promoters. Activates transcription of transcription factor FOXR1 which in turn activates transcription of the heat shock chaperones HSPA1A and HSPA6 and the antioxidant NADPH-dependent reductase DHRS2. Also serves several other functions independently of its transcriptional activity. Involved in the repression of Ras-induced transcriptional activation of the c-fos gene in heat-stressed cells. Positively regulates pre-mRNA 3'-end processing and polyadenylation of HSP70 mRNA upon heat-stressed cells in a symplekin (SYMPK)-dependent manner. Plays a role in nuclear export of stress-induced HSP70 mRNA. Plays a role in the regulation of mitotic progression. Also plays a role as a negative regulator of non-homologous end joining (NHEJ) repair activity in a DNA damage-dependent manner. Involved in stress-induced cancer cell proliferation in a IER5-dependent manner. Its function is as follows. (Microbial infection) Plays a role in latent human immunodeficiency virus (HIV-1) transcriptional reactivation. Binds to the HIV-1 long terminal repeat promoter (LTR) to reactivate viral transcription by recruiting cellular transcriptional elongation factors, such as CDK9, CCNT1 and EP300. This chain is Heat shock factor protein 1, found in Homo sapiens (Human).